The following is a 151-amino-acid chain: Ribosome maturation factor RimP (151 aa).

It belongs to the RimP family.

It is found in the cytoplasm. Functionally, required for maturation of 30S ribosomal subunits. The polypeptide is Ribosome maturation factor RimP (Shewanella amazonensis (strain ATCC BAA-1098 / SB2B)).